Reading from the N-terminus, the 312-residue chain is uncharacterized protein (312 aa).

Positions 8–65 (PGLTCFEIFLAIAEAGSLGGAARELGLTQQAVSRRLASMEAQIGVRLAIRTTRGSQLT) constitute an HTH lysR-type domain. Positions 25–45 (LGGAARELGLTQQAVSRRLAS) form a DNA-binding region, H-T-H motif.

This sequence belongs to the LysR transcriptional regulatory family.

This is an uncharacterized protein from Mycobacterium tuberculosis (strain CDC 1551 / Oshkosh).